Reading from the N-terminus, the 365-residue chain is Histidinol-phosphate aminotransferase (365 aa).

N6-(pyridoxal phosphate)lysine is present on Lys-222.

It belongs to the class-II pyridoxal-phosphate-dependent aminotransferase family. Histidinol-phosphate aminotransferase subfamily. In terms of assembly, homodimer. It depends on pyridoxal 5'-phosphate as a cofactor.

It carries out the reaction L-histidinol phosphate + 2-oxoglutarate = 3-(imidazol-4-yl)-2-oxopropyl phosphate + L-glutamate. It functions in the pathway amino-acid biosynthesis; L-histidine biosynthesis; L-histidine from 5-phospho-alpha-D-ribose 1-diphosphate: step 7/9. The chain is Histidinol-phosphate aminotransferase from Geobacillus sp. (strain WCH70).